The primary structure comprises 176 residues: Glycine-rich RNA-binding protein 7 (176 aa).

An N-acetylalanine modification is found at Ala-2. The segment at 2–41 (ASGDVEYRCFVGGLAWATDDRALETAFAQYGDVIDSKIIN) is required for RNA chaperone activity. Residues 8 to 86 (YRCFVGGLAW…RSITVNEAQS (79 aa)) form the RRM domain. Arg-49 carries the ADP-ribosylarginine; by HopU1 modification. A disordered region spans residues 83–103 (EAQSRGSGGGGGHRGGGGGGY). Gly residues predominate over residues 88-103 (GSGGGGGHRGGGGGGY). Residues 88 to 175 (GSGGGGGHRG…GYGGSGGGGG (88 aa)) form a glycine-rich (GR) required for cell-to-cell movement region. The tract at residues 97–148 (GGGGGGYRSGGGGGYSGGGGSYGGGGGRREGGGGYSGGGGGYSSRGGGGGSY) is nuclear targeting sequence (M9). 2 positions are modified to phosphoserine: Ser-105 and Ser-117. Residues 131–176 (YSGGGGGYSSRGGGGGSYGGGRREGGGGYGGGEGGGYGGSGGGGGW) form a disordered region.

The protein belongs to the GR-RBP family. Interacts with TRN1. Interacts with the Pseudomonas syringae type III effector HopU1. Binds to small phloem-mobile single-stranded RNAs (ss-sRNA, e.g. small interfering RNA (siRNA) and microRNA (miRNA)) in the phloeme exudate, including viral-derived sRNA (vsiRNA). In terms of processing, ADP-ribosylated by the Pseudomonas syringae type III effector HopU1. ADP-ribosylation reduces the ability of the protein to bind RNA. In terms of tissue distribution, ubiquitous with strong expression in guard cell.

Its subcellular location is the cytoplasm. The protein resides in the nucleus. The protein localises to the secreted. Functionally, plays a role in RNA transcription or processing during stress. Binds RNAs and DNAs sequence with a preference to single-stranded nucleic acids. Displays strong affinity to poly(U) and poly(G) sequence. Involved in mRNA alternative splicing of numerous targets by modulating splice site selection. Negatively regulates the circadian oscillations of its own transcript as well as RBG8 transcript. Forms an interlocked post-transcriptional negative feedback loop with the RBG8 autoregulatory circuit. Both proteins negatively autoregulate and reciprocally crossregulate by binding to their pre-mRNAs and promoting unproductive splicing coupled to degradation via the NMD pathway. Involved in the regulation of abscisic acid and stress responses. Affects the growth and stress tolerance under high salt and dehydration stress conditions, and also confers freezing tolerance, particularly via the regulation of stomatal opening and closing in the guard cells. Exhibits RNA chaperone activity during the cold adaptation process. Involved in the export of mRNAs from the nucleus to the cytoplasm under cold stress conditions. Target of the Pseudomonas syringae type III effector HopU1, which could probably be involved in plant innate immunity. Component of the flowering autonomous pathway which promotes floral transition, at least partly by down-regulating FLC. Mediates cell-to-cell trafficking of RNA interference (RNAi) signals (small RNAs (sRNA), e.g. small interfering RNA (siRNA) and microRNA (miRNA)) which regulate growth and development, as well as responses to environmental inputs, including pathogen attack; can compromise zucchini yellow mosaic virus (ZYMV) and tobacco rattle virus (TRV) infections at the early stage. The polypeptide is Glycine-rich RNA-binding protein 7 (Arabidopsis thaliana (Mouse-ear cress)).